A 329-amino-acid polypeptide reads, in one-letter code: MDYASVAMAAAPTTTTTTNVSLRRQRHRKEKLLVLMGATGTGKSRLSIDLAAHFPLEVINSDKMQVYKGLDITTNKISVPDRGGVPHHLLGEVDPARGELTPADFRSLAGKAVSEITGRRKLPVLVGGSNSFIHALLVDRFDSSGPGVFEEGSHSVVSSELRYDCCFLWVDVSVKVLTDYLAKRVDDMLELGMFDELAEFYSPEDEDHDEDSATRTGLRKAIGVPEFDRYFEKFRPGDVEGEDPGRDRVRRGAFEEAVRAIKENTCHLAKRQIGKILRLKGAGWDLRRLDATESFRAAMTSDSGEKCTEIWEKQVLEPSVKIVSRFLDE.

ATP-binding positions include 37 to 44 (GATGTGKS), lysine 63, threonine 74, 129 to 131 (SNS), 220 to 222 (KAI), and lysine 313.

Belongs to the IPP transferase family. Mg(2+) serves as cofactor. In terms of tissue distribution, expressed in roots, stems, leaves and cones.

It carries out the reaction dimethylallyl diphosphate + AMP = N(6)-(dimethylallyl)adenosine 5'-phosphate + diphosphate. The catalysed reaction is dimethylallyl diphosphate + ADP = N(6)-(dimethylallyl)adenosine 5'-diphosphate + diphosphate. It catalyses the reaction dimethylallyl diphosphate + ATP = N(6)-(dimethylallyl)adenosine 5'-triphosphate + diphosphate. Involved in cytokinin biosynthesis. Catalyzes the transfer of an isopentenyl group from dimethylallyl diphosphate (DMAPP) to ATP, ADP and AMP. GMP, IMP, CMP or UMP are not used as substrates. This Humulus lupulus (European hop) protein is Adenylate isopentenyltransferase.